The chain runs to 340 residues: L-threonine 3-dehydrogenase (340 aa).

Cysteine 38 serves as a coordination point for Zn(2+). Active-site charge relay system residues include threonine 40 and histidine 43. Zn(2+)-binding residues include histidine 63, glutamate 64, cysteine 93, cysteine 96, cysteine 99, and cysteine 107. NAD(+)-binding positions include isoleucine 175, aspartate 195, arginine 200, 261–263, and 285–286; these read LGI and IY.

The protein belongs to the zinc-containing alcohol dehydrogenase family. As to quaternary structure, homotetramer. Zn(2+) serves as cofactor.

It is found in the cytoplasm. It catalyses the reaction L-threonine + NAD(+) = (2S)-2-amino-3-oxobutanoate + NADH + H(+). It functions in the pathway amino-acid degradation; L-threonine degradation via oxydo-reductase pathway; glycine from L-threonine: step 1/2. Functionally, catalyzes the NAD(+)-dependent oxidation of L-threonine to 2-amino-3-ketobutyrate. This chain is L-threonine 3-dehydrogenase, found in Xanthomonas euvesicatoria pv. vesicatoria (strain 85-10) (Xanthomonas campestris pv. vesicatoria).